Consider the following 435-residue polypeptide: Chaperone SurA (435 aa).

The first 29 residues, 1 to 29, serve as a signal peptide directing secretion; it reads MINKTLHTKHTLLGLLAMAVLMIPVWSQA. 2 PpiC domains span residues 180-281 and 290-390; these read QEDF…KMID and VTQY…RVDD.

It localises to the periplasm. It catalyses the reaction [protein]-peptidylproline (omega=180) = [protein]-peptidylproline (omega=0). In terms of biological role, chaperone involved in the correct folding and assembly of outer membrane proteins. Recognizes specific patterns of aromatic residues and the orientation of their side chains, which are found more frequently in integral outer membrane proteins. May act in both early periplasmic and late outer membrane-associated steps of protein maturation. The sequence is that of Chaperone SurA from Alcanivorax borkumensis (strain ATCC 700651 / DSM 11573 / NCIMB 13689 / SK2).